A 494-amino-acid chain; its full sequence is Aspartyl/glutamyl-tRNA(Asn/Gln) amidotransferase subunit B (494 aa).

It belongs to the GatB/GatE family. GatB subfamily. As to quaternary structure, heterotrimer of A, B and C subunits.

It carries out the reaction L-glutamyl-tRNA(Gln) + L-glutamine + ATP + H2O = L-glutaminyl-tRNA(Gln) + L-glutamate + ADP + phosphate + H(+). The catalysed reaction is L-aspartyl-tRNA(Asn) + L-glutamine + ATP + H2O = L-asparaginyl-tRNA(Asn) + L-glutamate + ADP + phosphate + 2 H(+). Its function is as follows. Allows the formation of correctly charged Asn-tRNA(Asn) or Gln-tRNA(Gln) through the transamidation of misacylated Asp-tRNA(Asn) or Glu-tRNA(Gln) in organisms which lack either or both of asparaginyl-tRNA or glutaminyl-tRNA synthetases. The reaction takes place in the presence of glutamine and ATP through an activated phospho-Asp-tRNA(Asn) or phospho-Glu-tRNA(Gln). This chain is Aspartyl/glutamyl-tRNA(Asn/Gln) amidotransferase subunit B, found in Rhodopseudomonas palustris (strain HaA2).